Consider the following 119-residue polypeptide: Protein Wnt-4 (119 aa).

Ser1 is lipidated: O-palmitoleoyl serine; by PORCN. Disulfide bonds link Cys69–Cys100 and Cys85–Cys95. The N-linked (GlcNAc...) asparagine glycan is linked to Asn86.

This sequence belongs to the Wnt family. Palmitoleoylation is required for efficient binding to frizzled receptors. Depalmitoleoylation leads to Wnt signaling pathway inhibition.

It localises to the secreted. The protein localises to the extracellular space. It is found in the extracellular matrix. Its function is as follows. Ligand for members of the frizzled family of seven transmembrane receptors. Plays an important role in embryonic development. This chain is Protein Wnt-4 (WNT4), found in Meleagris gallopavo (Wild turkey).